A 448-amino-acid polypeptide reads, in one-letter code: UDP-N-acetylmuramoylalanine--D-glutamate ligase (448 aa).

Residue 112 to 118 (GSNAKST) participates in ATP binding.

The protein belongs to the MurCDEF family.

The protein resides in the cytoplasm. The enzyme catalyses UDP-N-acetyl-alpha-D-muramoyl-L-alanine + D-glutamate + ATP = UDP-N-acetyl-alpha-D-muramoyl-L-alanyl-D-glutamate + ADP + phosphate + H(+). It participates in cell wall biogenesis; peptidoglycan biosynthesis. Cell wall formation. Catalyzes the addition of glutamate to the nucleotide precursor UDP-N-acetylmuramoyl-L-alanine (UMA). In Acinetobacter baumannii (strain ATCC 17978 / DSM 105126 / CIP 53.77 / LMG 1025 / NCDC KC755 / 5377), this protein is UDP-N-acetylmuramoylalanine--D-glutamate ligase.